Here is a 64-residue protein sequence, read N- to C-terminus: Potassium channel toxin kappa-KTx 3.4 (64 aa).

A signal peptide spans 1–26; that stretch reads MKSTLMTASLLILVLLSIIDYASVYA. The propeptide occupies 27 to 36; that stretch reads EFIDSEISLE. 2 disulfide bridges follow: cysteine 43-cysteine 61 and cysteine 47-cysteine 57.

Belongs to the short scorpion toxin superfamily. Potassium channel inhibitor kappa-KTx family. Kappa-KTx 3 subfamily. Expressed by the venom gland.

The protein resides in the secreted. Functionally, potassium channel inhibitor (Kv). The sequence is that of Potassium channel toxin kappa-KTx 3.4 from Heterometrus petersii (Asian forest scorpion).